The primary structure comprises 878 residues: Alanine--tRNA ligase (878 aa).

Zn(2+) is bound by residues histidine 558, histidine 562, cysteine 663, and histidine 667.

It belongs to the class-II aminoacyl-tRNA synthetase family. It depends on Zn(2+) as a cofactor.

The protein resides in the cytoplasm. It carries out the reaction tRNA(Ala) + L-alanine + ATP = L-alanyl-tRNA(Ala) + AMP + diphosphate. Its function is as follows. Catalyzes the attachment of alanine to tRNA(Ala) in a two-step reaction: alanine is first activated by ATP to form Ala-AMP and then transferred to the acceptor end of tRNA(Ala). Also edits incorrectly charged Ser-tRNA(Ala) and Gly-tRNA(Ala) via its editing domain. This Mycoplasmopsis synoviae (strain 53) (Mycoplasma synoviae) protein is Alanine--tRNA ligase.